A 275-amino-acid polypeptide reads, in one-letter code: 2,3,4,5-tetrahydropyridine-2,6-dicarboxylate N-succinyltransferase (275 aa).

It belongs to the transferase hexapeptide repeat family.

The protein resides in the cytoplasm. The enzyme catalyses (S)-2,3,4,5-tetrahydrodipicolinate + succinyl-CoA + H2O = (S)-2-succinylamino-6-oxoheptanedioate + CoA. The protein operates within amino-acid biosynthesis; L-lysine biosynthesis via DAP pathway; LL-2,6-diaminopimelate from (S)-tetrahydrodipicolinate (succinylase route): step 1/3. This Burkholderia multivorans (strain ATCC 17616 / 249) protein is 2,3,4,5-tetrahydropyridine-2,6-dicarboxylate N-succinyltransferase.